The primary structure comprises 1066 residues: Exportin-T (1066 aa).

The protein belongs to the exportin family.

It localises to the nucleus. It is found in the cytoplasm. Its function is as follows. tRNA nucleus export receptor which facilitates tRNA translocation across the nuclear pore complex. Involved in pre-tRNA splicing, probably by affecting the interaction of pre-tRNA with splicing endonuclease. This is Exportin-T (LOS1) from Laccaria bicolor (strain S238N-H82 / ATCC MYA-4686) (Bicoloured deceiver).